Reading from the N-terminus, the 111-residue chain is MQKLKVGDTIQVMAGAEASEKNPATKRGKVLKIDREAERVTVEGLRLVKRHMKKTPQSPEGGIVEKPGTIALANVQVVCAKCDKPTRVGIRTEGEEGKKKRFCKNCDALID.

The protein belongs to the universal ribosomal protein uL24 family. Part of the 50S ribosomal subunit.

Its function is as follows. One of two assembly initiator proteins, it binds directly to the 5'-end of the 23S rRNA, where it nucleates assembly of the 50S subunit. Functionally, one of the proteins that surrounds the polypeptide exit tunnel on the outside of the subunit. The protein is Large ribosomal subunit protein uL24 of Myxococcus xanthus (strain DK1622).